A 198-amino-acid chain; its full sequence is MPVPALCLLWALAMVTRPASAAPMGGPELAQHEELTLLFHGTLQLGQALNGVYRTTEGRLTKARNSLGLYGRTIELLGQEVSRGRDAAQELRASLLETQMEEDILQLQAEATAEVLGEVAQAQKVLRDSVQRLEVQLRSAWLGPAYREFEVLKAHADKQSHILWALTGHVQRQRREMVAQQHRLRQIQERLHTAALPA.

The N-terminal stretch at 1 to 21 (MPVPALCLLWALAMVTRPASA) is a signal peptide.

It belongs to the ANGPTL8 family. In terms of assembly, interacts with ANGPTL3. Post-translationally, proteolytically cleaved at the N-terminus. In terms of tissue distribution, predominantly expressed in liver. Also expressed in adipose tissues.

It is found in the secreted. Functionally, hormone that acts as a blood lipid regulator by regulating serum triglyceride levels. May be involved in the metabolic transition between fasting and refeeding: required to direct fatty acids to adipose tissue for storage in the fed state. This Homo sapiens (Human) protein is Angiopoietin-like protein 8.